A 315-amino-acid polypeptide reads, in one-letter code: Ribose-phosphate pyrophosphokinase (315 aa).

ATP is bound by residues 37 to 39 and 96 to 97; these read DGE and RQ. Histidine 131 and aspartate 170 together coordinate Mg(2+). Lysine 194 is an active-site residue. Residues arginine 196, aspartate 220, and 224 to 228 each bind D-ribose 5-phosphate; that span reads DTGGT.

The protein belongs to the ribose-phosphate pyrophosphokinase family. Class I subfamily. As to quaternary structure, homohexamer. Requires Mg(2+) as cofactor.

It localises to the cytoplasm. The catalysed reaction is D-ribose 5-phosphate + ATP = 5-phospho-alpha-D-ribose 1-diphosphate + AMP + H(+). Its pathway is metabolic intermediate biosynthesis; 5-phospho-alpha-D-ribose 1-diphosphate biosynthesis; 5-phospho-alpha-D-ribose 1-diphosphate from D-ribose 5-phosphate (route I): step 1/1. In terms of biological role, involved in the biosynthesis of the central metabolite phospho-alpha-D-ribosyl-1-pyrophosphate (PRPP) via the transfer of pyrophosphoryl group from ATP to 1-hydroxyl of ribose-5-phosphate (Rib-5-P). In Buchnera aphidicola subsp. Acyrthosiphon pisum (strain APS) (Acyrthosiphon pisum symbiotic bacterium), this protein is Ribose-phosphate pyrophosphokinase.